The primary structure comprises 154 residues: Toxin YhaV (154 aa).

In terms of assembly, homohexamer; forms a complex with PrlF (SohA) with stoichiometry PrlF(2)-YhaV(4), possibly as a YhaV(2)-PrlF(2)-YhaV(2) complex like the MazFE complex. May dimerize in solution.

In terms of biological role, toxic component of a type II toxin-antitoxin (TA) system. Has RNase activity in vitro. Acts as a transcription factor. The YhaV/PrlF complex binds the prlF-yhaV operon, probably negatively regulating its expression. This is Toxin YhaV (yhaV) from Escherichia coli O6:H1 (strain CFT073 / ATCC 700928 / UPEC).